The primary structure comprises 123 residues: Large ribosomal subunit protein uL14c (123 aa).

The protein belongs to the universal ribosomal protein uL14 family. Part of the 50S ribosomal subunit.

The protein localises to the plastid. The protein resides in the chloroplast. In terms of biological role, binds to 23S rRNA. The polypeptide is Large ribosomal subunit protein uL14c (Lolium perenne (Perennial ryegrass)).